We begin with the raw amino-acid sequence, 203 residues long: FMN-dependent NADH:quinone oxidoreductase (203 aa).

FMN contacts are provided by residues Ser-9, Ser-15–Ser-17, and Thr-139–Gly-142.

It belongs to the azoreductase type 1 family. As to quaternary structure, homodimer. It depends on FMN as a cofactor.

The enzyme catalyses 2 a quinone + NADH + H(+) = 2 a 1,4-benzosemiquinone + NAD(+). It catalyses the reaction N,N-dimethyl-1,4-phenylenediamine + anthranilate + 2 NAD(+) = 2-(4-dimethylaminophenyl)diazenylbenzoate + 2 NADH + 2 H(+). Quinone reductase that provides resistance to thiol-specific stress caused by electrophilic quinones. Its function is as follows. Also exhibits azoreductase activity. Catalyzes the reductive cleavage of the azo bond in aromatic azo compounds to the corresponding amines. This Albidiferax ferrireducens (strain ATCC BAA-621 / DSM 15236 / T118) (Rhodoferax ferrireducens) protein is FMN-dependent NADH:quinone oxidoreductase.